A 161-amino-acid chain; its full sequence is Early E3 17.7 kDa glycoprotein (161 aa).

2 N-linked (GlcNAc...) asparagine; by host glycosylation sites follow: N14 and N87. The helical transmembrane segment at 102-129 (IINPAIFLFLHVLTLVIVLAMAAEVIYN) threads the bilayer.

It localises to the host membrane. This is Early E3 17.7 kDa glycoprotein from Murine adenovirus A serotype 1 (MAdV-1).